The chain runs to 460 residues: GTPase Der (460 aa).

2 consecutive EngA-type G domains span residues 2–164 (QSII…HEEF) and 196–368 (IRVG…ENFT). GTP is bound by residues 8–15 (GKPNVGKS), 55–59 (DSGGL), 116–119 (NKVD), 202–209 (GRVNVGKS), 249–253 (DTAGI), and 313–316 (NKWD). The KH-like domain maps to 369 to 453 (QKIQTSKLNT…PLVIASRKKG (85 aa)).

Belongs to the TRAFAC class TrmE-Era-EngA-EngB-Septin-like GTPase superfamily. EngA (Der) GTPase family. In terms of assembly, associates with the 50S ribosomal subunit.

GTPase that plays an essential role in the late steps of ribosome biogenesis. The chain is GTPase Der from Campylobacter jejuni subsp. jejuni serotype O:23/36 (strain 81-176).